The following is a 509-amino-acid chain: MSRTLLRFLEDGAMSDVTVVAGDSTFLGHKVILSLHSDYFYRLFNGDFTSPDTVTLDATDDAVRTVFTYMYAGCDGLNDRTIDDLQSIIVLADYLGITKLVDECVRRIVSKVDVLNCVGVYTFAETYHITDLQRAAKTFLTELLGSKEAFEELSQDDAVIALRETRNIVDRRSILRAILLWVRKCPDRIEQLKVLVAAVDDVDDDDNVYTIYERYAEELKDMIACPLSYNCVVVVDRDRYVRLINPDTLWSKRVTYIRKRAIGDRFTVVCMNNVLYCLGGTLDGAPTCDVLAYDLLTNEYSLMPEMGHYRRNASACIVNGYIYVVGGVDEENRLIGSVEYWQPGMEEWHDAPYLQANVETATVCYRNELWIVGGTVDLYHPTFISAVKKLTDNRWMSMEPLPEPRSGATTVVYNNRLYCIGGRIHGGAYTNHVYNYLDESRTWERVGDMANVRRNPSCCVYNKAIYVLGGNTNAVEKYNGWKWQEVGNISTYPACNNTAYPFFYTNDEI.

The BTB domain occupies 15–79 (SDVTVVAGDS…MYAGCDGLND (65 aa)). 5 Kelch repeats span residues 274-320 (VLYC…IVNG), 321-368 (YIYV…YRNE), 370-415 (WIVG…VYNN), 416-463 (RLYC…VYNK), and 465-509 (IYVL…NDEI).

It belongs to the poxviruses Kelch family.

This Myxoma virus (strain Lausanne) (MYXV) protein is Kelch repeat protein M-T9.